Reading from the N-terminus, the 113-residue chain is Iron-sulfur cluster insertion protein ErpA (113 aa).

Positions 41, 105, and 107 each coordinate iron-sulfur cluster.

It belongs to the HesB/IscA family. Homodimer. Requires iron-sulfur cluster as cofactor.

In terms of biological role, required for insertion of 4Fe-4S clusters for at least IspG. The chain is Iron-sulfur cluster insertion protein ErpA from Mannheimia succiniciproducens (strain KCTC 0769BP / MBEL55E).